A 102-amino-acid polypeptide reads, in one-letter code: Putative pterin-4-alpha-carbinolamine dehydratase (102 aa).

The protein belongs to the pterin-4-alpha-carbinolamine dehydratase family.

The enzyme catalyses (4aS,6R)-4a-hydroxy-L-erythro-5,6,7,8-tetrahydrobiopterin = (6R)-L-erythro-6,7-dihydrobiopterin + H2O. The polypeptide is Putative pterin-4-alpha-carbinolamine dehydratase (Burkholderia orbicola (strain MC0-3)).